Reading from the N-terminus, the 502-residue chain is UDP-N-acetylmuramate--L-alanine ligase (502 aa).

Position 119-125 (119-125 (GSHGKST)) interacts with ATP.

Belongs to the MurCDEF family.

The protein resides in the cytoplasm. It carries out the reaction UDP-N-acetyl-alpha-D-muramate + L-alanine + ATP = UDP-N-acetyl-alpha-D-muramoyl-L-alanine + ADP + phosphate + H(+). It participates in cell wall biogenesis; peptidoglycan biosynthesis. Functionally, cell wall formation. This Frankia casuarinae (strain DSM 45818 / CECT 9043 / HFP020203 / CcI3) protein is UDP-N-acetylmuramate--L-alanine ligase.